The sequence spans 45 residues: Ribosome-inactivating protein TAP-29 (45 aa).

The protein belongs to the ribosome-inactivating protein family. Type 1 RIP subfamily.

It carries out the reaction Endohydrolysis of the N-glycosidic bond at one specific adenosine on the 28S rRNA.. Capable of inhibiting HIV-1 infection and replication. It inactivates eukaryotic 60S ribosomal subunits. This is Ribosome-inactivating protein TAP-29 from Trichosanthes kirilowii (Chinese snake gourd).